We begin with the raw amino-acid sequence, 92 residues long: Large ribosomal subunit protein bL27 (92 aa).

Residues 1–9 constitute a propeptide that is removed on maturation; that stretch reads MIKANLQLF.

This sequence belongs to the bacterial ribosomal protein bL27 family. In terms of processing, the N-terminus is cleaved by ribosomal processing cysteine protease Prp.

This is Large ribosomal subunit protein bL27 from Acetivibrio thermocellus (strain ATCC 27405 / DSM 1237 / JCM 9322 / NBRC 103400 / NCIMB 10682 / NRRL B-4536 / VPI 7372) (Clostridium thermocellum).